A 54-amino-acid polypeptide reads, in one-letter code: UPF0391 membrane protein Sde_0270 (54 aa).

Transmembrane regions (helical) follow at residues I6–V26 and G29–G49.

Belongs to the UPF0391 family.

It is found in the cell membrane. This Saccharophagus degradans (strain 2-40 / ATCC 43961 / DSM 17024) protein is UPF0391 membrane protein Sde_0270.